A 1005-amino-acid chain; its full sequence is DNA-directed RNA polymerase subunit beta (1005 aa).

The protein belongs to the RNA polymerase beta chain family. In terms of assembly, in plastids the minimal PEP RNA polymerase catalytic core is composed of four subunits: alpha, beta, beta', and beta''. When a (nuclear-encoded) sigma factor is associated with the core the holoenzyme is formed, which can initiate transcription (Potential).

It is found in the plastid. It localises to the apicoplast. It carries out the reaction RNA(n) + a ribonucleoside 5'-triphosphate = RNA(n+1) + diphosphate. Functionally, DNA-dependent RNA polymerase catalyzes the transcription of DNA into RNA using the four ribonucleoside triphosphates as substrates. The sequence is that of DNA-directed RNA polymerase subunit beta (rpoB) from Theileria parva (East coast fever infection agent).